We begin with the raw amino-acid sequence, 430 residues long: Ribosomal protein uS12 methylthiotransferase RimO (430 aa).

Residues 1 to 116 enclose the MTTase N-terminal domain; the sequence is MRVGIKVLGC…IANAIENGTD (116 aa). [4Fe-4S] cluster contacts are provided by cysteine 10, cysteine 46, cysteine 79, cysteine 148, cysteine 152, and cysteine 155. The 232-residue stretch at 134–365 folds into the Radical SAM core domain; that stretch reads LEERPYAYVK…LLQAEISNSR (232 aa). In terms of domain architecture, TRAM spans 367–430; sequence DRFVGKKLKF…DEYDMWGSVI (64 aa).

Belongs to the methylthiotransferase family. RimO subfamily. As to quaternary structure, monomer. [4Fe-4S] cluster is required as a cofactor.

Its subcellular location is the cytoplasm. The catalysed reaction is L-aspartate(89)-[ribosomal protein uS12]-hydrogen + (sulfur carrier)-SH + AH2 + 2 S-adenosyl-L-methionine = 3-methylsulfanyl-L-aspartate(89)-[ribosomal protein uS12]-hydrogen + (sulfur carrier)-H + 5'-deoxyadenosine + L-methionine + A + S-adenosyl-L-homocysteine + 2 H(+). Functionally, catalyzes the methylthiolation of an aspartic acid residue of ribosomal protein uS12. In Thermotoga maritima (strain ATCC 43589 / DSM 3109 / JCM 10099 / NBRC 100826 / MSB8), this protein is Ribosomal protein uS12 methylthiotransferase RimO.